We begin with the raw amino-acid sequence, 317 residues long: Putative 2-hydroxyacid dehydrogenase SA2098 (317 aa).

Residues 155–156 (EI), 234–236 (ASR), and aspartate 260 each bind NAD(+). Arginine 236 is a catalytic residue. Residue glutamate 265 is part of the active site. Catalysis depends on histidine 283, which acts as the Proton donor. Position 283–286 (283–286 (HIGN)) interacts with NAD(+).

Belongs to the D-isomer specific 2-hydroxyacid dehydrogenase family.

This is Putative 2-hydroxyacid dehydrogenase SA2098 from Staphylococcus aureus (strain N315).